The primary structure comprises 219 residues: Ribose-5-phosphate isomerase A (219 aa).

Residues 28-31 (SGST), 81-84 (DGAD), and 94-97 (KGGG) each bind substrate. Glu-103 functions as the Proton acceptor in the catalytic mechanism. Lys-121 contacts substrate.

The protein belongs to the ribose 5-phosphate isomerase family. Homodimer.

The enzyme catalyses aldehydo-D-ribose 5-phosphate = D-ribulose 5-phosphate. It functions in the pathway carbohydrate degradation; pentose phosphate pathway; D-ribose 5-phosphate from D-ribulose 5-phosphate (non-oxidative stage): step 1/1. In terms of biological role, catalyzes the reversible conversion of ribose-5-phosphate to ribulose 5-phosphate. The polypeptide is Ribose-5-phosphate isomerase A (Histophilus somni (strain 129Pt) (Haemophilus somnus)).